The primary structure comprises 288 residues: Oxaloacetate decarboxylase (288 aa).

Ser47 is a binding site for substrate. Asp85 contacts Mg(2+). Arg156 and His232 together coordinate substrate.

It belongs to the isocitrate lyase/PEP mutase superfamily. Oxaloacetate decarboxylase family. As to quaternary structure, homotetramer; dimer of dimers. The cofactor is Mg(2+).

It carries out the reaction oxaloacetate + H(+) = pyruvate + CO2. Its function is as follows. Catalyzes the decarboxylation of oxaloacetate into pyruvate. Seems to play a role in maintaining cellular concentrations of bicarbonate and pyruvate. This is Oxaloacetate decarboxylase from Rhodopseudomonas palustris (strain ATCC BAA-98 / CGA009).